The sequence spans 78 residues: Large ribosomal subunit protein bL28 (78 aa).

It belongs to the bacterial ribosomal protein bL28 family.

This is Large ribosomal subunit protein bL28 from Dichelobacter nodosus (strain VCS1703A).